We begin with the raw amino-acid sequence, 256 residues long: Pimeloyl-[acyl-carrier protein] methyl ester esterase (256 aa).

The 228-residue stretch at 15–242 folds into the AB hydrolase-1 domain; the sequence is HLVLLHGWGL…AAHAPFISHP (228 aa). Substrate is bound by residues Trp22, 82 to 83, and 143 to 147; these read SL and FLALQ. Ser82 functions as the Nucleophile in the catalytic mechanism. Residues Asp207 and His235 contribute to the active site. His235 serves as a coordination point for substrate.

It belongs to the AB hydrolase superfamily. Carboxylesterase BioH family. Monomer.

The protein localises to the cytoplasm. It carries out the reaction 6-carboxyhexanoyl-[ACP] methyl ester + H2O = 6-carboxyhexanoyl-[ACP] + methanol + H(+). It participates in cofactor biosynthesis; biotin biosynthesis. Functionally, the physiological role of BioH is to remove the methyl group introduced by BioC when the pimeloyl moiety is complete. It allows to synthesize pimeloyl-ACP via the fatty acid synthetic pathway through the hydrolysis of the ester bonds of pimeloyl-ACP esters. The chain is Pimeloyl-[acyl-carrier protein] methyl ester esterase from Escherichia coli (strain SMS-3-5 / SECEC).